The chain runs to 175 residues: Protein FanH (175 aa).

Positions Met-1 to Ala-20 are cleaved as a signal peptide. An intrachain disulfide couples Cys-39 to Cys-77.

The protein resides in the fimbrium. In terms of biological role, involved in the biosynthesis of K99 fimbriae. The sequence is that of Protein FanH (fanH) from Escherichia coli.